The sequence spans 468 residues: ATP synthase subunit beta (468 aa).

155-162 provides a ligand contact to ATP; it reads GGAGVGKT.

Belongs to the ATPase alpha/beta chains family. F-type ATPases have 2 components, CF(1) - the catalytic core - and CF(0) - the membrane proton channel. CF(1) has five subunits: alpha(3), beta(3), gamma(1), delta(1), epsilon(1). CF(0) has three main subunits: a(1), b(2) and c(9-12). The alpha and beta chains form an alternating ring which encloses part of the gamma chain. CF(1) is attached to CF(0) by a central stalk formed by the gamma and epsilon chains, while a peripheral stalk is formed by the delta and b chains.

It localises to the cell inner membrane. The enzyme catalyses ATP + H2O + 4 H(+)(in) = ADP + phosphate + 5 H(+)(out). In terms of biological role, produces ATP from ADP in the presence of a proton gradient across the membrane. The catalytic sites are hosted primarily by the beta subunits. This is ATP synthase subunit beta from Thermotoga petrophila (strain ATCC BAA-488 / DSM 13995 / JCM 10881 / RKU-1).